A 277-amino-acid chain; its full sequence is Bifunctional protein FolD (277 aa).

NADP(+) is bound by residues 164–166 (GRS), S189, and T230.

Belongs to the tetrahydrofolate dehydrogenase/cyclohydrolase family. In terms of assembly, homodimer.

It catalyses the reaction (6R)-5,10-methylene-5,6,7,8-tetrahydrofolate + NADP(+) = (6R)-5,10-methenyltetrahydrofolate + NADPH. The enzyme catalyses (6R)-5,10-methenyltetrahydrofolate + H2O = (6R)-10-formyltetrahydrofolate + H(+). The protein operates within one-carbon metabolism; tetrahydrofolate interconversion. Its function is as follows. Catalyzes the oxidation of 5,10-methylenetetrahydrofolate to 5,10-methenyltetrahydrofolate and then the hydrolysis of 5,10-methenyltetrahydrofolate to 10-formyltetrahydrofolate. This is Bifunctional protein FolD from Clostridium perfringens (strain ATCC 13124 / DSM 756 / JCM 1290 / NCIMB 6125 / NCTC 8237 / Type A).